The primary structure comprises 381 residues: Beta-lactamase CMY-4 (381 aa).

An N-terminal signal peptide occupies residues 1-20; that stretch reads MMKKSLCCALLLTASFSTFA. Ser-84 (acyl-ester intermediate) is an active-site residue. A beta-lactam contacts are provided by Ser-84, Gln-140, Tyr-170, and Asn-172.

This sequence belongs to the class-C beta-lactamase family.

The catalysed reaction is a beta-lactam + H2O = a substituted beta-amino acid. In terms of biological role, class C beta-lactamase which confers resistance to penicillins and cephalosporins. The sequence is that of Beta-lactamase CMY-4 from Klebsiella pneumoniae.